The following is a 208-amino-acid chain: High frequency lysogenization protein HflD homolog (208 aa).

Belongs to the HflD family.

It localises to the cytoplasm. Its subcellular location is the cell inner membrane. This chain is High frequency lysogenization protein HflD homolog, found in Pseudomonas entomophila (strain L48).